We begin with the raw amino-acid sequence, 29 residues long: NAD-reducing hydrogenase HoxS subunit delta (29 aa).

Residues 1 to 11 are compositionally biased toward basic and acidic residues; that stretch reads MKHSEKNEIAS. The segment at 1-29 is disordered; it reads MKHSEKNEIASHELPTTPLDPVLAAGRES.

This sequence belongs to the [NiFe]/[NiFeSe] hydrogenase small subunit family. Tetramer of an alpha and a gamma subunits (flavin-containing dimer), and a delta and a nickel-containing beta subunits (hydrogenase dimer). Requires [4Fe-4S] cluster as cofactor. [3Fe-4S] cluster is required as a cofactor. It depends on [2Fe-2S] cluster as a cofactor. The cofactor is FMN. Ni(2+) serves as cofactor.

It localises to the cytoplasm. It carries out the reaction H2 + NAD(+) = NADH + H(+). The sequence is that of NAD-reducing hydrogenase HoxS subunit delta (hoxY) from Rhodococcus opacus (Nocardia opaca).